The following is a 495-amino-acid chain: Maturase K (495 aa).

It belongs to the intron maturase 2 family. MatK subfamily.

The protein resides in the plastid. It localises to the chloroplast. In terms of biological role, usually encoded in the trnK tRNA gene intron. Probably assists in splicing its own and other chloroplast group II introns. This Torreya californica (California nutmeg) protein is Maturase K.